The following is a 361-amino-acid chain: Histidinol-phosphate aminotransferase (361 aa).

The segment at 26-45 (GMDPEDLTKLSSNENPHGPS) is disordered. Lysine 222 is subject to N6-(pyridoxal phosphate)lysine.

The protein belongs to the class-II pyridoxal-phosphate-dependent aminotransferase family. Histidinol-phosphate aminotransferase subfamily. It depends on pyridoxal 5'-phosphate as a cofactor.

It catalyses the reaction L-histidinol phosphate + 2-oxoglutarate = 3-(imidazol-4-yl)-2-oxopropyl phosphate + L-glutamate. Its pathway is amino-acid biosynthesis; L-histidine biosynthesis; L-histidine from 5-phospho-alpha-D-ribose 1-diphosphate: step 7/9. The sequence is that of Histidinol-phosphate aminotransferase (hisC) from Haloferax volcanii (strain ATCC 29605 / DSM 3757 / JCM 8879 / NBRC 14742 / NCIMB 2012 / VKM B-1768 / DS2) (Halobacterium volcanii).